The chain runs to 478 residues: Ribulose bisphosphate carboxylase large chain (478 aa).

The propeptide occupies Met-1–Ser-2. Residue Pro-3 is modified to N-acetylproline. N6,N6,N6-trimethyllysine is present on Lys-14. Positions 123 and 173 each coordinate substrate. Lys-175 functions as the Proton acceptor in the catalytic mechanism. Lys-177 contacts substrate. Mg(2+) is bound by residues Lys-201, Asp-203, and Glu-204. Lys-201 carries the N6-carboxylysine modification. Residue His-294 is the Proton acceptor of the active site. Arg-295, His-327, and Ser-379 together coordinate substrate.

The protein belongs to the RuBisCO large chain family. Type I subfamily. In terms of assembly, heterohexadecamer of 8 large chains and 8 small chains; disulfide-linked. The disulfide link is formed within the large subunit homodimers. Requires Mg(2+) as cofactor. In terms of processing, the disulfide bond which can form in the large chain dimeric partners within the hexadecamer appears to be associated with oxidative stress and protein turnover.

The protein localises to the plastid. It is found in the chloroplast. It catalyses the reaction 2 (2R)-3-phosphoglycerate + 2 H(+) = D-ribulose 1,5-bisphosphate + CO2 + H2O. It carries out the reaction D-ribulose 1,5-bisphosphate + O2 = 2-phosphoglycolate + (2R)-3-phosphoglycerate + 2 H(+). In terms of biological role, ruBisCO catalyzes two reactions: the carboxylation of D-ribulose 1,5-bisphosphate, the primary event in carbon dioxide fixation, as well as the oxidative fragmentation of the pentose substrate in the photorespiration process. Both reactions occur simultaneously and in competition at the same active site. In Neurachne munroi, this protein is Ribulose bisphosphate carboxylase large chain.